A 161-amino-acid polypeptide reads, in one-letter code: MSEVFTHINEEGRARMVDVSEKDNTIRQAIASGKISMEKDTLERIKEGTISKGDVLAVAQVGGIMGAKSTSQIIPMCHNILISNCDINFKFDFENSEIEIVAMTKTVGKTGIEMEALTAVSAAALTIYDMCKAIDREMVISDIMLVKKSGGKSGDFERVGL.

Substrate-binding positions include 76–78 (MCH) and 114–115 (ME). The active site involves Asp129.

The protein belongs to the MoaC family. Homohexamer; trimer of dimers.

It catalyses the reaction (8S)-3',8-cyclo-7,8-dihydroguanosine 5'-triphosphate = cyclic pyranopterin phosphate + diphosphate. It functions in the pathway cofactor biosynthesis; molybdopterin biosynthesis. Functionally, catalyzes the conversion of (8S)-3',8-cyclo-7,8-dihydroguanosine 5'-triphosphate to cyclic pyranopterin monophosphate (cPMP). This chain is Cyclic pyranopterin monophosphate synthase, found in Clostridium acetobutylicum (strain ATCC 824 / DSM 792 / JCM 1419 / IAM 19013 / LMG 5710 / NBRC 13948 / NRRL B-527 / VKM B-1787 / 2291 / W).